A 255-amino-acid chain; its full sequence is Coenzyme F420:L-glutamate ligase (255 aa).

Residues 11 to 14 (IPLI), 40 to 41 (ST), and lysine 45 contribute to the GTP site. Residue aspartate 109 coordinates a divalent metal cation. Asparagine 112 contacts GTP. 3 residues coordinate a divalent metal cation: aspartate 150, threonine 151, and glutamate 208. 206–213 (MGEGAGGT) contacts GTP.

This sequence belongs to the CofE family. Homodimer. Mg(2+) serves as cofactor. The cofactor is Mn(2+). It depends on K(+) as a cofactor.

The catalysed reaction is oxidized coenzyme F420-0 + GTP + L-glutamate = oxidized coenzyme F420-1 + GDP + phosphate + H(+). It catalyses the reaction oxidized coenzyme F420-1 + GTP + L-glutamate = oxidized coenzyme F420-2 + GDP + phosphate + H(+). Its pathway is cofactor biosynthesis; coenzyme F420 biosynthesis. In terms of biological role, catalyzes the GTP-dependent successive addition of two or more gamma-linked L-glutamates to the L-lactyl phosphodiester of 7,8-didemethyl-8-hydroxy-5-deazariboflavin (F420-0) to form coenzyme F420-0-glutamyl-glutamate (F420-2) or polyglutamated F420 derivatives. This Methanosarcina barkeri (strain Fusaro / DSM 804) protein is Coenzyme F420:L-glutamate ligase.